We begin with the raw amino-acid sequence, 384 residues long: Putative exopolyphosphatase (384 aa).

5 residues coordinate Mn(2+): Asp40, Asp42, Asp116, His138, and Asp200.

This sequence belongs to the PPase class C family. The cofactor is Mn(2+).

It carries out the reaction [phosphate](n) + H2O = [phosphate](n-1) + phosphate + H(+). Functionally, degradation of inorganic polyphosphates. The sequence is that of Putative exopolyphosphatase from Schizosaccharomyces pombe (strain 972 / ATCC 24843) (Fission yeast).